Here is a 434-residue protein sequence, read N- to C-terminus: MSFNTLIDWNSCSPEQQRALLTRPAISASDSITRTVSDILDNVKTRGDDALREYSAKFDKTEVTALRVTPEEIAAAGARLSDELKQAMTAAVKNIETFHSAQTLPPVDVETQPGVRCQQVTRPVSSVGLYIPGGSAPLFSTVLMLATPARIAGCQKVVLCSPPPIADEILYAAQLCGVQEIFNVGGAQAIAALAFGSESVPKVDKIFGPGNAFVTEAKRQVSQRLDGAAIDMPAGPSEVLVIADSGATPDFVASDLLSQAEHGPDSQVILLTPDADIARKVAEAVERQLAELPRADTARQALSASRLIVTKDLAQCVAISNQYGPEHLIIQTRNARDLVDAITSAGSVFLGDWSPESAGDYASGTNHVLPTYGYTATCSSLGLADFQKRMTVQELSKAGFSALASTIETLAAAERLTAHKNAVTLRVNALKEQA.

Residues tyrosine 130, glutamine 188, and asparagine 211 each coordinate NAD(+). Substrate contacts are provided by serine 237, glutamine 259, and histidine 262. Residues glutamine 259 and histidine 262 each contribute to the Zn(2+) site. Residues glutamate 326 and histidine 327 each act as proton acceptor in the active site. Residues histidine 327, aspartate 360, glutamate 414, and histidine 419 each contribute to the substrate site. Aspartate 360 is a binding site for Zn(2+). Histidine 419 lines the Zn(2+) pocket.

Belongs to the histidinol dehydrogenase family. As to quaternary structure, homodimer. Zn(2+) serves as cofactor. It depends on Mn(2+) as a cofactor.

It catalyses the reaction L-histidinol + 2 NAD(+) + H2O = L-histidine + 2 NADH + 3 H(+). The protein operates within amino-acid biosynthesis; L-histidine biosynthesis; L-histidine from 5-phospho-alpha-D-ribose 1-diphosphate: step 9/9. With respect to regulation, activity is lost when the metal is removed through urea denaturation or chelation, and can be regained by addition of metal. Functionally, catalyzes the sequential NAD-dependent oxidations of L-histidinol to L-histidinaldehyde and then to L-histidine. This is Histidinol dehydrogenase (hisD) from Salmonella typhimurium (strain LT2 / SGSC1412 / ATCC 700720).